The primary structure comprises 247 residues: MDIDTVRKTAFAMPLTSPAYPPGPYRFINREFFIITYRTDPARLRAMVPEPLEVPEPLVSYEFIRMADSTGFGDYTESGQVIPVTFEGKPGTYTLAMYLDDHPPLAGGREMWGFPKKLATPRLQTSKDTLLGTLDYGPVRVATGTMGYKHKELDLAAQQQRLARPNFLLKIIPHVDGRTARICELSRNTMEDIVMKGAWTGPASLELAHHALAPVADLPVLEIVEARHLIADLTLGMGEVVFDYLAK.

K116 serves as the catalytic Schiff-base intermediate with acetoacetate.

Belongs to the ADC family.

It catalyses the reaction acetoacetate + H(+) = acetone + CO2. Its function is as follows. Catalyzes the conversion of acetoacetate to acetone and carbon dioxide. The polypeptide is Acetoacetate decarboxylase (Ralstonia nicotianae (strain ATCC BAA-1114 / GMI1000) (Ralstonia solanacearum)).